Here is a 238-residue protein sequence, read N- to C-terminus: End-binding protein 1 (238 aa).

Positions 15-117 constitute a Calponin-homology (CH) domain; the sequence is FVGRVSLLKW…FFQWFKWFFD (103 aa). The interval 101–238 is interaction with aurora kinase; it reads KYMDNFEFFQ…EDILYAEYHQ (138 aa). Residues 124-165 show a composition bias toward polar residues; that stretch reads KSGATESGSANAVTKTSKPGNRSGSTAASMQNPKASSTSGPS. Positions 124–169 are disordered; it reads KSGATESGSANAVTKTSKPGNRSGSTAASMQNPKASSTSGPSIDSK. Position 148 is a phosphoserine (Ser-148). One can recognise an EB1 C-terminal domain in the interval 156–238; the sequence is PKASSTSGPS…EDILYAEYHQ (83 aa).

Belongs to the MAPRE family. As to quaternary structure, homodimer; disulfide-linked and via interaction of the C-terminal EB1-specific domains. Interacts with BOP1 (via C-terminal WD repeats). Interacts with giardin subunit gamma, neurogenic locus notch homolog protein, GL50803_8358 and GL50803_11327. Interacts (via C-terminal residues 101-238) with aurora kinase. Interacts with tubulin gamma chain. Phosphorylated in vitro by aurora kinase. Phosphorylation is important for cell division.

Its subcellular location is the nucleus membrane. It localises to the cytoplasm. The protein resides in the cytoskeleton. It is found in the spindle. The protein localises to the nucleus envelope. Its subcellular location is the flagellum axoneme. It localises to the cell projection. The protein resides in the cilium. It is found in the flagellum. Involved in cell division. Involved in mitosis. Regulates dynamics of microtubules (MTs) during mitosis. Required for cytokinesis. Binds polymerized MTs in vitro. Is able to rescue a mitotic division defect, the proper positioning of the nucleus, of the S.cerevisiae BIM1 knockout mutant in a complementation assay. May play a role in spindle positioning and MT distribution. May be involved in MT nucleation for the formation of median bodies and in the biogenesis of flagella. Based on its localization to both the flagellar exit point and the distal flagellar tips, it may mediate the transition from anterograde to retrograde intraflagellar transport (IFT). The polypeptide is End-binding protein 1 (Giardia intestinalis (strain ATCC 50803 / WB clone C6) (Giardia lamblia)).